We begin with the raw amino-acid sequence, 171 residues long: Protein phosphatase 1 regulatory subunit 1A (171 aa).

Residue Met-1 is modified to N-acetylmethionine. The disordered stretch occupies residues 1-171 (MEPDNSPRKI…PLDSQGASLV (171 aa)). Residues 9–12 (KIQF) are essential for activity. The span at 19–29 (PHLDPEAAEQI) shows a compositional bias: basic and acidic residues. Phosphothreonine is present on Thr-35. An essential for activity region spans residues 42–54 (TSDQSSPEIDEDR). Phosphoserine is present on residues Ser-43, Ser-46, Ser-47, and Ser-67. Residues 122 to 146 (GSASRPDTPGTAQKSAESNPKTQEQ) are compositionally biased toward polar residues. Residues 143 to 171 (TQEQCGVEPRTEDSSAHMLPLDSQGASLV) form an interaction with PPP1R15A region.

Belongs to the protein phosphatase inhibitor 1 family. As to quaternary structure, interacts with PPP1R15A. In terms of processing, phosphorylation of Thr-35 is required for activity.

Inhibitor of protein-phosphatase 1. This protein may be important in hormonal control of glycogen metabolism. Hormones that elevate intracellular cAMP increase I-1 activity in many tissues. I-1 activation may impose cAMP control over proteins that are not directly phosphorylated by PKA. Following a rise in intracellular calcium, I-1 is inactivated by calcineurin (or PP2B). Does not inhibit type-2 phosphatases. In Mus musculus (Mouse), this protein is Protein phosphatase 1 regulatory subunit 1A (Ppp1r1a).